We begin with the raw amino-acid sequence, 892 residues long: MSSLVCDCPHLESVGEVTKEELIKKSHGSCQDCRVRGPNLWACLENGCSYVGCGESHVDHSTLHSQDTKHCLTVNLTTLRVWCYTCSKEVFLDRKLSTQPTSAKLQDSHTQESKMSSSLTLKIPAAVVSENLDIELEEEDELKTRGLTGLKNIGNTCYMNAALQALSNCPPLTHYFLDCGGLARTDKKPALCKSYQKLMSDIWHKNRPGFVIPTNLFQGIKSVNPTFRGYSQQDAQEFLRCLMDVLHEELKEQIVEVEEDAQTGIVEENLDEDKSQSDNDFHSCDSGSSSDHAESESRKLSEELTESTMLIHEDQKDVESCKTWQKEKKFSNNLNQNHFLQDFEKNIQSTIEESECLKQETVKVQIQSKAADFTAEVNMNDLPTSQTPLLNEGATTHLSSSPPKPGAVWTGHKKVPGLCPAKKRKQKKYHSVIADIFDGTIVSSVQCLTCDRVSVTLETFQDLSLPIPGKEDLAKLHSSSHQSSLVKAGSCGEAYAPQGWIAFFLEYFKSWFWGPTVTLQDCLAAFFARDELKGDNMYSCEKCKKLRNGVKFCKVQKFPEILCIHLKRFRHELMFSTKIGTHVSFPLEGLDLQPFLAKDSPSQIVTYDLLSVICHHGTASSGHYIAYCRNNLNNLWYEFDDQSVTEVSEATVQNAEAYVLFYRKASEEAQKERRRVSCLLNIMEPSLLQFYISRQWLNKFKTFAEPGPISNNDFLCIHGGVPPRKASFIEDLVVMLPQNIWDYLYSRYGGGPAVNHLYVCYTCQTEMEKIEKRRKMELETFIRLNKAFQEEESPAVIYCISMQWFREWEGFVKSKDSDPPGPIDNTKIAAAKCGHITLRQGADSGQISEETWLFLQSIYGGGPEITLRQNVTLAESEGGHAEEKIDVETRNI.

The UBP-type zinc-finger motif lies at 6–109 (CDCPHLESVG…PTSAKLQDSH (104 aa)). Residues Cys-8, His-10, Cys-30, Cys-33, Cys-43, Cys-48, Cys-53, His-60, His-64, His-70, Cys-83, and Cys-86 each coordinate Zn(2+). One can recognise a USP domain in the interval 148–665 (TGLKNIGNTC…EAYVLFYRKA (518 aa)). Cys-157 functions as the Nucleophile in the catalytic mechanism. The disordered stretch occupies residues 268–311 (ENLDEDKSQSDNDFHSCDSGSSSDHAESESRKLSEELTESTMLI). 2 stretches are compositionally biased toward basic and acidic residues: residues 272-283 (EDKSQSDNDFHS) and 291-302 (DHAESESRKLSE). His-623 functions as the Proton acceptor in the catalytic mechanism. 2 consecutive DUSP domains span residues 667–760 (EEAQ…LYVC) and 768–871 (EKIE…RQNV).

Belongs to the peptidase C19 family. USP20/USP33 subfamily.

It is found in the cytoplasm. It localises to the perinuclear region. The protein resides in the cytoskeleton. Its subcellular location is the microtubule organizing center. The protein localises to the centrosome. It carries out the reaction Thiol-dependent hydrolysis of ester, thioester, amide, peptide and isopeptide bonds formed by the C-terminal Gly of ubiquitin (a 76-residue protein attached to proteins as an intracellular targeting signal).. Its function is as follows. Deubiquitinating enzyme involved in various processes such as centrosome duplication, cellular migration and beta-2 adrenergic receptor/ADRB2 recycling. Involved in regulation of centrosome duplication by mediating deubiquitination of ccp110 in S and G2/M phase, leading to stabilize ccp110 during the period which centrioles duplicate and elongate. Involved in cell migration via its interaction with intracellular domain of robo1, leading to regulate the Slit signaling. Plays a role in commissural axon guidance cross the ventral midline of the neural tube in a Slit-dependent manner, possibly by mediating the deubiquitination of robo1. Acts as a regulator of G-protein coupled receptor (GPCR) signaling by mediating the deubiquitination of beta-arrestins (arrb1 and arrb2) and beta-2 adrenergic receptor (adrb2). Deubiquitinates dio2, thereby regulating thyroid hormone regulation. Mediates deubiquitination of both 'Lys-48'- and 'Lys-63'-linked polyubiquitin chains. The polypeptide is Ubiquitin carboxyl-terminal hydrolase 33 (usp33) (Xenopus tropicalis (Western clawed frog)).